An 84-amino-acid polypeptide reads, in one-letter code: MFMADAYLADTVWYVGQIIFIVAICLLVTIVVVAFLATFKLCIQLCGMCNTLVLSPSIYVFNRGRQFYEFYNDVKPPVLDVDDV.

The Virion surface portion of the chain corresponds to 1-18; that stretch reads MFMADAYLADTVWYVGQI. A helical transmembrane segment spans residues 19–39; it reads IFIVAICLLVTIVVVAFLATF. The Intravirion segment spans residues 40 to 80; the sequence is KLCIQLCGMCNTLVLSPSIYVFNRGRQFYEFYNDVKPPVLD.

Belongs to the betacoronaviruses E protein family. Homopentamer. Interacts with membrane protein M in the budding compartment of the host cell, which is located between endoplasmic reticulum and the Golgi complex. Interacts with Nucleoprotein.

Its subcellular location is the host Golgi apparatus membrane. In terms of biological role, plays a central role in virus morphogenesis and assembly. Acts as a viroporin and self-assembles in host membranes forming pentameric protein-lipid pores that allow ion transport. Also plays a role in the induction of apoptosis. The sequence is that of Envelope small membrane protein from Human coronavirus OC43 (HCoV-OC43).